A 327-amino-acid chain; its full sequence is MQQLTEIVEQALVIIDQASDLKALDDIRVDYLGKKGKITDMMKMMGSLSPEEKPAFGQAVNDAKQAIQQKLTERIDGLKSAELEAKLIAEKIDVTLPGRTIEIGGLHPVTRTIERIETFFGELGFSVKQGPEIEDDFHNFDALNISEHHPARADHDTFYFNPKLMLRTQTSGVQIRTMETEKPPLRIISPGRVYRNDYDQTHTPMFHQVEGLLVDEHVNFAELKGVLHDFLRNFFEEDLQVRFRPSYFPFTEPSAEVDVMGKNGKWLEVLGCGMVHPNVLRSVGIDPEKYSGFAFGMGVERLTMLRYGVNDLRAFFENDLRFLKQFK.

Glutamate 252 is a Mg(2+) binding site.

The protein belongs to the class-II aminoacyl-tRNA synthetase family. Phe-tRNA synthetase alpha subunit type 1 subfamily. Tetramer of two alpha and two beta subunits. Mg(2+) is required as a cofactor.

The protein resides in the cytoplasm. The catalysed reaction is tRNA(Phe) + L-phenylalanine + ATP = L-phenylalanyl-tRNA(Phe) + AMP + diphosphate + H(+). The protein is Phenylalanine--tRNA ligase alpha subunit of Shewanella oneidensis (strain ATCC 700550 / JCM 31522 / CIP 106686 / LMG 19005 / NCIMB 14063 / MR-1).